The primary structure comprises 286 residues: MKIEGVLIPLITPFKDGKVDLASYEKLIRHYSKKGVAGFMPLATTGETPTLSDYEYQSILEKTVECNELNLPIYVGFGGNNTEKMTKDIKMLDKYNIKGILSVCPYYNRPDQRGIYEHFKRISESTSLDIVLYNIPYRTGRNIENDTIRRLSELDNIVGVKDACGDFTQTTELLLNRPDNFSILTGEDAFFYSTLMLGGDGGIMASAHLNTEKYVEVFNKSKQNDYKSALEIWKQVANMIPLLFEEPNPAPIKYCLSKTGVIASEALRLPLVPISENLKEKLNKFL.

Pyruvate is bound at residue T45. Catalysis depends on Y133, which acts as the Proton donor/acceptor. The Schiff-base intermediate with substrate role is filled by K161. Residue I203 coordinates pyruvate.

Belongs to the DapA family. In terms of assembly, homotetramer; dimer of dimers.

Its subcellular location is the cytoplasm. It carries out the reaction L-aspartate 4-semialdehyde + pyruvate = (2S,4S)-4-hydroxy-2,3,4,5-tetrahydrodipicolinate + H2O + H(+). It participates in amino-acid biosynthesis; L-lysine biosynthesis via DAP pathway; (S)-tetrahydrodipicolinate from L-aspartate: step 3/4. Catalyzes the condensation of (S)-aspartate-beta-semialdehyde [(S)-ASA] and pyruvate to 4-hydroxy-tetrahydrodipicolinate (HTPA). This is 4-hydroxy-tetrahydrodipicolinate synthase 2 from Clostridium acetobutylicum (strain ATCC 824 / DSM 792 / JCM 1419 / IAM 19013 / LMG 5710 / NBRC 13948 / NRRL B-527 / VKM B-1787 / 2291 / W).